A 351-amino-acid polypeptide reads, in one-letter code: N6-Methyl-AMP deaminase (351 aa).

Positions 23 and 25 each coordinate Zn(2+). Residues His-25, Asn-27, His-73, 105–108 (STPR), Asp-147, and Gly-180 each bind N(6)-methyl-AMP. Zn(2+) is bound at residue His-207. Positions 210, 292, and 293 each coordinate N(6)-methyl-AMP. Residue Glu-210 is the Proton donor of the active site. Position 292 (Asp-292) interacts with Zn(2+).

This sequence belongs to the metallo-dependent hydrolases superfamily. Adenosine and AMP deaminases family. Monomer. Zn(2+) serves as cofactor.

The enzyme catalyses N(6)-methyl-AMP + H2O + H(+) = IMP + methylamine. Its function is as follows. Catalyzes the hydrolysis of the free cytosolic methylated adenosine nucleotide N(6)-methyl-AMP (N6-mAMP) to produce inositol monophosphate (IMP) and methylamine. Is required for the catabolism of cytosolic N6-mAMP, which is derived from the degradation of mRNA containing N6-methylated adenine (m6A). The polypeptide is N6-Methyl-AMP deaminase (Bos taurus (Bovine)).